The sequence spans 128 residues: Flagellar hook-basal body complex protein FliE (128 aa).

The disordered stretch occupies residues 1 to 60 (MRPVASFRPPPTFSALQGGASSQATKTAGIDQRGTNQAFSLLDPQSTQSNSTDSSFGEMG). Positions 33-55 (RGTNQAFSLLDPQSTQSNSTDSS) are enriched in polar residues.

The protein belongs to the FliE family.

The protein localises to the bacterial flagellum basal body. In Rhodopirellula baltica (strain DSM 10527 / NCIMB 13988 / SH1), this protein is Flagellar hook-basal body complex protein FliE.